Reading from the N-terminus, the 999-residue chain is Ulvan lyase, long isoform (999 aa).

Residues 1–21 form the signal peptide; the sequence is MKCLKTLLVSTTLLTAFSLNA. 126–127 contacts substrate; the sequence is SH. The active-site Proton donor/acceptor is the histidine 127. Residues aspartate 189, aspartate 199, and lysine 201 each coordinate Ca(2+). Tyrosine 280 and arginine 297 together coordinate substrate. Residues aspartate 300, aspartate 303, and tyrosine 305 each coordinate Ca(2+). Tyrosine 361 contributes to the substrate binding site.

It belongs to the polysaccharide lyase 24 family.

Ulvan lyase involved in ulvan degradation. Ulvan is the main polysaccharide component of the Ulvales (green seaweed) cell wall. It is composed of disaccharide building blocks comprising 3-sulfated rhamnose (Rha3S) linked to D-glucuronic acid (GlcA), L-iduronic acid (IduA), or D-xylose (Xyl). Ulvan lyase catalyzes preferentially the endolytic cleavage of the glycosidic bond between Rha3S and the uronic acid GlcA, but not IduA, producing oligosaccharides that have unsaturated 4-deoxy-L-threo-hex-4-enopyranosiduronic acid (deltaUA) at the non-reducing end. The most abundant end products in the degradation of the ulvan polysaccharide were deltaUA-Rha3S disaccharides and deltaUA-Rha3S-IduA-Rha3S and deltaUA-Rha3S-Xyl-Rha3S tetrasaccharides. This is Ulvan lyase, long isoform from Alteromonas sp. (strain LOR).